The following is a 526-amino-acid chain: GMP synthase [glutamine-hydrolyzing] (526 aa).

Residues 10–208 enclose the Glutamine amidotransferase type-1 domain; the sequence is RILILDFGSQ…VVDLCGCEKL (199 aa). Cys-87 functions as the Nucleophile in the catalytic mechanism. Active-site residues include His-182 and Glu-184. The GMPS ATP-PPase domain occupies 209-401; that stretch reads WTTENIIDDS…LGLPSDMVYR (193 aa). ATP is bound at residue 236–242; it reads SGGVDSS.

In terms of assembly, homodimer.

It catalyses the reaction XMP + L-glutamine + ATP + H2O = GMP + L-glutamate + AMP + diphosphate + 2 H(+). The protein operates within purine metabolism; GMP biosynthesis; GMP from XMP (L-Gln route): step 1/1. Functionally, catalyzes the synthesis of GMP from XMP. The protein is GMP synthase [glutamine-hydrolyzing] of Hydrogenovibrio crunogenus (strain DSM 25203 / XCL-2) (Thiomicrospira crunogena).